Here is a 420-residue protein sequence, read N- to C-terminus: Phospholipase A1-II 3 (420 aa).

The signal sequence occupies residues 1–21; that stretch reads MCCFLLVSVLLATTLTDVASA. N-linked (GlcNAc...) asparagine glycosylation is present at asparagine 231. Serine 240 (acyl-ester intermediate) is an active-site residue. The active-site Charge relay system is serine 240. N-linked (GlcNAc...) asparagine glycosylation is present at asparagine 294. Catalysis depends on charge relay system residues aspartate 305 and histidine 343. Positions 367-388 form a coiled coil; sequence VVDRDLALVNKEVDALRDEYQV. N-linked (GlcNAc...) asparagine glycosylation occurs at asparagine 403.

This sequence belongs to the AB hydrolase superfamily. Lipase family.

It localises to the secreted. Its function is as follows. Acylhydrolase that catalyzes the hydrolysis of phospholipids at the sn-1 position. This is Phospholipase A1-II 3 from Oryza sativa subsp. japonica (Rice).